A 361-amino-acid chain; its full sequence is Inactive 2'-5'-oligoadenylate synthase 1D (361 aa).

It belongs to the 2-5A synthase family. In terms of assembly, interacts with OAS1A, the interaction inhibits OAS1A catalytic activity. As to expression, expressed specifically in oocytes (at protein level). Expressed at highest level in ovary with lesser amounts in intestine, brain, thymus lung, kidney, liver and uterus.

It localises to the cytoplasm. Does not have 2'-5'-oligoadenylate synthetase activity, but can bind double-stranded RNA. May play a role in the control of female fertility, possibly by binding to and inhibiting OAS1A. In Mus musculus (Mouse), this protein is Inactive 2'-5'-oligoadenylate synthase 1D.